The chain runs to 333 residues: Probable ABC transporter permease protein y4mJ (333 aa).

The next 10 membrane-spanning stretches (helical) occupy residues 30 to 50 (LAIAGAIVLLVLAVGTQVPQA), 62 to 82 (AGAPLIIMSLGVLLVVITGGI), 84 to 104 (LSVGSVFSLTGMVTAQAMASG), 110 to 130 (ALIGLGVGLVFGSINGFLVTV), 133 to 153 (LAPFVVTLITFAVAGSLAFIV), 175 to 195 (IPGVPNYILFCIVLLVVIEIF), 228 to 248 (FAYVASSLLASFSGLLTISYI), 253 to 273 (STAGSSLMLQAIAAVVIGGAS), 274 to 294 (LLGGTGTAVGAVLGALMITVI), and 300 to 320 (LIGINSFWQGSVTGLAILIAV).

This sequence belongs to the binding-protein-dependent transport system permease family. AraH/RbsC subfamily.

Its subcellular location is the cell inner membrane. In terms of biological role, probably part of the binding-protein-dependent transport system y4mIJK. This system probably transports a sugar. Probably responsible for the translocation of the substrate across the membrane. The sequence is that of Probable ABC transporter permease protein y4mJ from Sinorhizobium fredii (strain NBRC 101917 / NGR234).